The following is a 432-amino-acid chain: Serine hydroxymethyltransferase (432 aa).

(6S)-5,6,7,8-tetrahydrofolate-binding positions include Leu-117 and 121–123 (GHL). Lys-226 is modified (N6-(pyridoxal phosphate)lysine). 366-368 (SPF) serves as a coordination point for (6S)-5,6,7,8-tetrahydrofolate.

This sequence belongs to the SHMT family. Homodimer. Requires pyridoxal 5'-phosphate as cofactor.

It is found in the cytoplasm. The enzyme catalyses (6R)-5,10-methylene-5,6,7,8-tetrahydrofolate + glycine + H2O = (6S)-5,6,7,8-tetrahydrofolate + L-serine. It functions in the pathway one-carbon metabolism; tetrahydrofolate interconversion. The protein operates within amino-acid biosynthesis; glycine biosynthesis; glycine from L-serine: step 1/1. Catalyzes the reversible interconversion of serine and glycine with tetrahydrofolate (THF) serving as the one-carbon carrier. This reaction serves as the major source of one-carbon groups required for the biosynthesis of purines, thymidylate, methionine, and other important biomolecules. Also exhibits THF-independent aldolase activity toward beta-hydroxyamino acids, producing glycine and aldehydes, via a retro-aldol mechanism. This chain is Serine hydroxymethyltransferase, found in Salinibacter ruber (strain DSM 13855 / M31).